The following is a 175-amino-acid chain: Methylmalonyl-CoA epimerase, mitochondrial (175 aa).

The N-terminal 35 residues, 1–35 (MARVLKVAAASAAGLFPRLRTPVSTVRTSASLSSH), are a transit peptide targeting the mitochondrion. The region spanning 46 to 175 (RLNHVAVAVP…GGVLVELEQA (130 aa)) is the VOC domain. H49 provides a ligand contact to Co(2+). Position 113 is an N6-succinyllysine (K113). Residue H121 participates in Co(2+) binding. K149 carries the N6-acetyllysine; alternate modification. Residue K149 is modified to N6-succinyllysine; alternate. Residue E171 participates in Co(2+) binding.

This sequence belongs to the methylmalonyl-CoA epimerase family.

It is found in the mitochondrion. The enzyme catalyses (R)-methylmalonyl-CoA = (S)-methylmalonyl-CoA. Functionally, methylmalonyl-CoA epimerase involved in propionyl-CoA metabolism. This Bos taurus (Bovine) protein is Methylmalonyl-CoA epimerase, mitochondrial (MCEE).